Reading from the N-terminus, the 319-residue chain is Beta-ketoacyl-[acyl-carrier-protein] synthase III (319 aa).

Catalysis depends on residues Cys-113 and His-246. An ACP-binding region spans residues Gln-247 to Arg-251. Asn-276 is an active-site residue.

It belongs to the thiolase-like superfamily. FabH family. Homodimer.

Its subcellular location is the cytoplasm. It catalyses the reaction malonyl-[ACP] + acetyl-CoA + H(+) = 3-oxobutanoyl-[ACP] + CO2 + CoA. It functions in the pathway lipid metabolism; fatty acid biosynthesis. Functionally, catalyzes the condensation reaction of fatty acid synthesis by the addition to an acyl acceptor of two carbons from malonyl-ACP. Catalyzes the first condensation reaction which initiates fatty acid synthesis and may therefore play a role in governing the total rate of fatty acid production. Possesses both acetoacetyl-ACP synthase and acetyl transacylase activities. Its substrate specificity determines the biosynthesis of branched-chain and/or straight-chain of fatty acids. The polypeptide is Beta-ketoacyl-[acyl-carrier-protein] synthase III (Ehrlichia chaffeensis (strain ATCC CRL-10679 / Arkansas)).